The following is a 632-amino-acid chain: MHGLLLAGLAAALPLGVAGLPARQQSGLSPRGVDINPYRFASMAKYSEHKSTSQMVHSFSYSKDDDYVATATKLVKSTFPNMTFRTVKDHYIGTNGIGHVHFKQTAHGIDIDNADFNVNIGRDGKVFTFGNSFYEGEMPKTNPLTKRDFSDPVKALQGAIKTLKLPVKPQSAKAMPMKEAETFKFEGTSGALSDPMAKLVYIQKDGKLHLTWRVETDVGDNWLLSYVDSKETETVHNVVDYVASADYKVFAWGLNDPTEGQPTMIKDPWNTTGTGSPFTWHGDGQMDYTVTRGNNIAAQDNPSGGEQWENNYRPDSPELSFVYEYSEQMEPDQYKDFAITQLFYTTNTYHDVLYALGFTEEAGNFQMNNNGKGGEGNDFAICNAQDGSGTNNANFATPPDGQNGRMRMYTWTTAQPSRDGDLEAGIVIHEYTHGLSNRLCGGPANSNCLNELEAGGMGEGWGDFYATAIRLKQGDTHDTDYTMGEWAANMKGGIREYPYSTNMQTNPYTYADVQGMDEVHGIGTVWATILYEVLWNLIDEHGMSKNIMPKFVNGAPSDGRNLAMKLVLDGMTLMPCNPNFMQARDAIIDADQALTNGQNKCALMKAFSKRGLGANYKHGKNRVNNFDMPADC.

Residues 1–19 (MHGLLLAGLAAALPLGVAG) form the signal peptide. A propeptide spanning residues 20 to 244 (LPARQQSGLS…VHNVVDYVAS (225 aa)) is cleaved from the precursor. N-linked (GlcNAc...) asparagine glycosylation occurs at Asn270. His429 provides a ligand contact to Zn(2+). Glu430 is an active-site residue. Position 433 (His433) interacts with Zn(2+).

The protein belongs to the peptidase M36 family. Requires Zn(2+) as cofactor.

Its subcellular location is the secreted. In terms of biological role, secreted metalloproteinase probably acting as a virulence factor. The chain is Extracellular metalloproteinase 2 (MEP2) from Trichophyton rubrum (Athlete's foot fungus).